A 351-amino-acid polypeptide reads, in one-letter code: UDP-3-O-acylglucosamine N-acyltransferase (351 aa).

His240 acts as the Proton acceptor in catalysis.

Belongs to the transferase hexapeptide repeat family. LpxD subfamily. As to quaternary structure, homotrimer.

The enzyme catalyses a UDP-3-O-[(3R)-3-hydroxyacyl]-alpha-D-glucosamine + a (3R)-hydroxyacyl-[ACP] = a UDP-2-N,3-O-bis[(3R)-3-hydroxyacyl]-alpha-D-glucosamine + holo-[ACP] + H(+). It participates in bacterial outer membrane biogenesis; LPS lipid A biosynthesis. Catalyzes the N-acylation of UDP-3-O-acylglucosamine using 3-hydroxyacyl-ACP as the acyl donor. Is involved in the biosynthesis of lipid A, a phosphorylated glycolipid that anchors the lipopolysaccharide to the outer membrane of the cell. The protein is UDP-3-O-acylglucosamine N-acyltransferase of Pseudomonas fluorescens (strain Pf0-1).